Consider the following 153-residue polypeptide: Large ribosomal subunit protein uL30 (153 aa).

This sequence belongs to the universal ribosomal protein uL30 family. In terms of assembly, part of the 50S ribosomal subunit.

The polypeptide is Large ribosomal subunit protein uL30 (Methanocella arvoryzae (strain DSM 22066 / NBRC 105507 / MRE50)).